A 375-amino-acid chain; its full sequence is MAQSRRMLVLRAVVEDYIRSQEPVGSTTLTRDHDLGVSSATVRNDMAALEDEGYLIQPHTSAGRVPTEKGYRYFVDRLATVVPLSEAQRRGINSFLSGSVNLQDTLQRAARLLAQITGQVAVVAAPSLSKSTLRHIEIVPVSINTLLAVVITDTGRVAQHILNVTKLPDVTTLTHLTNEINTQCSGVSLTRTADCVRQMGARKEYHAISTLAETLAQAFDGMADDERASELYMAGTSRLAHQRTVADLAPLFDALEEQVVLMKLMSSLSETTQSDGVGVAIGSETHTPGLLHASVVTSGYGRTSAAATDGATHAAASSQTENQSGDDTRQAGEPVAFVGSIGPTHMDYAATMAAVRAVARYLTAFLAHDEGQPAD.

Positions 307-318 (ATDGATHAAASS) are enriched in low complexity. Positions 307-331 (ATDGATHAAASSQTENQSGDDTRQA) are disordered.

The protein belongs to the HrcA family.

Negative regulator of class I heat shock genes (grpE-dnaK-dnaJ and groELS operons). Prevents heat-shock induction of these operons. The polypeptide is Heat-inducible transcription repressor HrcA (Bifidobacterium adolescentis (strain ATCC 15703 / DSM 20083 / NCTC 11814 / E194a)).